Reading from the N-terminus, the 638-residue chain is Bromodomain-containing factor 2 (638 aa).

The segment covering 1–10 has biased composition (basic and acidic residues); that stretch reads MSRTNMDTRH. Residues 1-54 are disordered; it reads MSRTNMDTRHAHSALLAAPQSATANSRSSNSSSESSSNKNNINVGVGDDSGNVS. Over residues 25–43 the composition is skewed to low complexity; it reads NSRSSNSSSESSSNKNNIN. Residues 130-239 form the Bromo 1 domain; that stretch reads EAEELPPHQS…KYFEKKLSAM (110 aa). Residues 250-306 form a disordered region; sequence KKTSRNRKKNEDMDSPLVIRRSVSTTNDNIGESGNREGVSGGRPKRTIHPPKSKDLF. Residue Ser264 is modified to Phosphoserine. Residues 271 to 281 show a composition bias toward polar residues; the sequence is SVSTTNDNIGE. The 110-residue stretch at 317–426 folds into the Bromo 2 domain; that stretch reads KTLQKKFRTC…ELFNFHWLEN (110 aa). The interval 435–460 is disordered; the sequence is TDSDLEEDNYSSSYSSDDEYDDEDIN. Residues 450-460 show a composition bias toward acidic residues; it reads SDDEYDDEDIN. Residues 468–537 are a coiled coil; the sequence is AIQYLEQKLK…INELSDLEMN (70 aa). Residues 506-590 form the NET domain; the sequence is TLLRRKAMKH…EKKNNNNSKR (85 aa). The disordered stretch occupies residues 586–638; the sequence is NNSKRKLSGNYSTAPTNKKKKTLKFLEKDEIINNNNYSDSEEDSSDSSDSDSD. Over residues 624-638 the composition is skewed to acidic residues; it reads DSEEDSSDSSDSDSD.

It belongs to the BET family. As to quaternary structure, interacts with the TFIID subunit TAF7 and with histone H4. Post-translationally, phosphorylated by the casein kinase CK2 complex.

The protein localises to the cytoplasm. Its subcellular location is the nucleus. Its function is as follows. Transcription factor involved in the expression of a broad class of genes including snRNAs. Required for sporulation and DNA-damage repair. Prevents the spreading of SIR silencing at telomeres and protects histone H4, but not H3, from deacetylation. The polypeptide is Bromodomain-containing factor 2 (BDF2) (Saccharomyces cerevisiae (strain ATCC 204508 / S288c) (Baker's yeast)).